A 297-amino-acid polypeptide reads, in one-letter code: MAKVSELYDVTWEEMRDKMRKWREENSRNSEQIVEVGEELISEYASKLGDDIWIIYEQVMIAALDYGRDDLALFCLQELRRQFPGSHRVKRLTGMRFEAMERYDDAIQLYDRILQEDPTNTAARKRKIAIRKAQGKNVEAIRELNEYLEQFVGDQEAWHELAELYINEHDYAKAAFCLEELMMTNPYNHLYCQQYAEVKYTQGGLENLELSRKYFAQALKLNNRNMRALFGLYMSASHIASNPKASAKTKKDNMKYASWAASQINKAYQFAGRSKKETKYSLKAVEDMLETLQITQS.

Ala-2 carries the post-translational modification N-acetylalanine. TPR repeat units follow at residues 87–120 (HRVKRLTGMRFEAMERYDDAIQLYDRILQEDPTN), 155–188 (QEAWHELAELYINEHDYAKAAFCLEELMMTNPYN), and 192–225 (CQQYAEVKYTQGGLENLELSRKYFAQALKLNNRN). Lys-255 bears the N6-acetyllysine mark.

It belongs to the EMC2 family. In terms of assembly, component of the ER membrane protein complex (EMC).

The protein localises to the endoplasmic reticulum membrane. Functionally, part of the endoplasmic reticulum membrane protein complex (EMC) that enables the energy-independent insertion into endoplasmic reticulum membranes of newly synthesized membrane proteins. Preferentially accommodates proteins with transmembrane domains that are weakly hydrophobic or contain destabilizing features such as charged and aromatic residues. Involved in the cotranslational insertion of multi-pass membrane proteins in which stop-transfer membrane-anchor sequences become ER membrane spanning helices. It is also required for the post-translational insertion of tail-anchored/TA proteins in endoplasmic reticulum membranes. By mediating the proper cotranslational insertion of N-terminal transmembrane domains in an N-exo topology, with translocated N-terminus in the lumen of the ER, controls the topology of multi-pass membrane proteins like the G protein-coupled receptors. By regulating the insertion of various proteins in membranes, it is indirectly involved in many cellular processes. In Bos taurus (Bovine), this protein is ER membrane protein complex subunit 2.